We begin with the raw amino-acid sequence, 315 residues long: 1,2-dihydroxy-3,5-cyclohexadiene-1,4-dicarboxylate dehydrogenase (315 aa).

A divalent metal cation is bound by residues H159, H203, and H255.

The protein belongs to the PdxA family.

The catalysed reaction is (3S,4R)-3,4-dihydroxycyclohexa-1,5-diene-1,4-dicarboxylate + NAD(+) = 3,4-dihydroxybenzoate + CO2 + NADH. Its function is as follows. Involved in the degradation of terephthalate (TPA) via the protocatechuate (PCA) 4,5-cleavage pathway. Catalyzes the dehydrogenation of 1,2-dihydroxy-3,5-cyclohexadiene-1,4-dicarboxylate (DCD) to yield protocatechuate (PCA). This Comamonas sp protein is 1,2-dihydroxy-3,5-cyclohexadiene-1,4-dicarboxylate dehydrogenase (tphBI).